Consider the following 157-residue polypeptide: DNA gyrase inhibitor (157 aa).

The protein belongs to the DNA gyrase inhibitor family. In terms of assembly, interacts with DNA gyrase.

The protein localises to the cytoplasm. Its function is as follows. Inhibits the supercoiling activity of DNA gyrase. Acts by inhibiting DNA gyrase at an early step, prior to (or at the step of) binding of DNA by the gyrase. It protects cells against toxins that target DNA gyrase, by inhibiting activity of these toxins and reducing the formation of lethal double-strand breaks in the cell. In Enterobacter lignolyticus (strain SCF1), this protein is DNA gyrase inhibitor.